A 333-amino-acid chain; its full sequence is Glycerol-3-phosphate dehydrogenase [NAD(P)+] (333 aa).

NADPH contacts are provided by Trp-16, Arg-36, and Lys-109. Residues Lys-109, Gly-137, and Ser-139 each contribute to the sn-glycerol 3-phosphate site. Ala-141 contributes to the NADPH binding site. Residues Lys-192, Asp-245, Ser-255, Arg-256, and Asn-257 each contribute to the sn-glycerol 3-phosphate site. Lys-192 functions as the Proton acceptor in the catalytic mechanism. Arg-256 serves as a coordination point for NADPH. 2 residues coordinate NADPH: Val-280 and Glu-282.

The protein belongs to the NAD-dependent glycerol-3-phosphate dehydrogenase family.

Its subcellular location is the cytoplasm. It carries out the reaction sn-glycerol 3-phosphate + NAD(+) = dihydroxyacetone phosphate + NADH + H(+). The enzyme catalyses sn-glycerol 3-phosphate + NADP(+) = dihydroxyacetone phosphate + NADPH + H(+). It functions in the pathway membrane lipid metabolism; glycerophospholipid metabolism. Its function is as follows. Catalyzes the reduction of the glycolytic intermediate dihydroxyacetone phosphate (DHAP) to sn-glycerol 3-phosphate (G3P), the key precursor for phospholipid synthesis. The sequence is that of Glycerol-3-phosphate dehydrogenase [NAD(P)+] from Parvibaculum lavamentivorans (strain DS-1 / DSM 13023 / NCIMB 13966).